The following is a 445-amino-acid chain: Acetylcholine-gated chloride channel subunit acc-2 (445 aa).

An N-terminal signal peptide occupies residues 1-26; the sequence is MIFTLLSTLPVLIITTELDYSELVHS. Residues 27-258 are Extracellular-facing; the sequence is AELVSSSSYI…LHVTIIFERR (232 aa). N-linked (GlcNAc...) asparagine glycosylation is found at asparagine 46, asparagine 59, asparagine 121, and asparagine 162. Cysteine 177 and cysteine 191 are disulfide-bonded. A glycan (N-linked (GlcNAc...) asparagine) is linked at asparagine 218. A helical transmembrane segment spans residues 259–279; that stretch reads FIWYFMQAYLPTYLTIFISWI. At 280–286 the chain is on the cytoplasmic side; sequence SFSLGSR. A helical membrane pass occupies residues 287-307; the sequence is AIPARTMLGVNSLLAIVFSFG. Residues 308–326 are Extracellular-facing; that stretch reads NIMRNLPRVSYIKGIDVWM. Residues 327-347 traverse the membrane as a helical segment; sequence LVSMTFIFCSLLELAIVGFMV. The Cytoplasmic segment spans residues 348–407; that stretch reads RDETVAKKKQQKKISGNISREESPHGIISERRFMFPPGCSESSKSLSSCTSGWTPERIDS. Residues 408–428 form a helical membrane-spanning segment; it reads ISSVMFPFSFFVFNIIYWFYY. Over 429–445 the chain is Extracellular; it reads IHRKEIIKQNLINRVDG.

It belongs to the ligand-gated ion channel (TC 1.A.9) family. As to quaternary structure, homopentamer (in vitro). May interact with either acc-3 or acc-4; the interactions do not result in significant heteropentameric ion channel activity. Expressed in RIA, RIG, PHA and AIZ glutamatergic neurons, URX and RIH cholinergic neurons, and in male-specific MCM neurons.

The protein localises to the cell membrane. Acetylcholine-gated chloride channel subunit. Currents in channels are triggered in response to acetylcholine. Channel properties may be modulated by the formation of homomeric and heteromeric channels. This is Acetylcholine-gated chloride channel subunit acc-2 from Caenorhabditis elegans.